We begin with the raw amino-acid sequence, 194 residues long: ATP synthase subunit b 1 (194 aa).

The chain crosses the membrane as a helical span at residues 1–21; the sequence is MLLGTVVTVLSTLPAIAYAMD.

The protein belongs to the ATPase B chain family. F-type ATPases have 2 components, F(1) - the catalytic core - and F(0) - the membrane proton channel. F(1) has five subunits: alpha(3), beta(3), gamma(1), delta(1), epsilon(1). F(0) has three main subunits: a(1), b(2) and c(10-14). The alpha and beta chains form an alternating ring which encloses part of the gamma chain. F(1) is attached to F(0) by a central stalk formed by the gamma and epsilon chains, while a peripheral stalk is formed by the delta and b chains.

It is found in the cell inner membrane. Its function is as follows. F(1)F(0) ATP synthase produces ATP from ADP in the presence of a proton or sodium gradient. F-type ATPases consist of two structural domains, F(1) containing the extramembraneous catalytic core and F(0) containing the membrane proton channel, linked together by a central stalk and a peripheral stalk. During catalysis, ATP synthesis in the catalytic domain of F(1) is coupled via a rotary mechanism of the central stalk subunits to proton translocation. Functionally, component of the F(0) channel, it forms part of the peripheral stalk, linking F(1) to F(0). This Granulibacter bethesdensis (strain ATCC BAA-1260 / CGDNIH1) protein is ATP synthase subunit b 1.